The sequence spans 183 residues: Ribosome-recycling factor (183 aa).

It belongs to the RRF family.

Its subcellular location is the cytoplasm. In terms of biological role, responsible for the release of ribosomes from messenger RNA at the termination of protein biosynthesis. May increase the efficiency of translation by recycling ribosomes from one round of translation to another. The protein is Ribosome-recycling factor of Christiangramia forsetii (strain DSM 17595 / CGMCC 1.15422 / KT0803) (Gramella forsetii).